The following is a 420-amino-acid chain: Exodeoxyribonuclease 7 large subunit (420 aa).

It belongs to the XseA family. In terms of assembly, heterooligomer composed of large and small subunits.

The protein resides in the cytoplasm. The enzyme catalyses Exonucleolytic cleavage in either 5'- to 3'- or 3'- to 5'-direction to yield nucleoside 5'-phosphates.. In terms of biological role, bidirectionally degrades single-stranded DNA into large acid-insoluble oligonucleotides, which are then degraded further into small acid-soluble oligonucleotides. The polypeptide is Exodeoxyribonuclease 7 large subunit (Helicobacter pylori (strain ATCC 700392 / 26695) (Campylobacter pylori)).